The following is an 826-amino-acid chain: Ribonucleoside-diphosphate reductase large subunit (826 aa).

Substrate is bound by residues T171, 186 to 187, G217, 387 to 391, and 594 to 598; these read SC, NLCAE, and PTSGC. Residues C187 and C403 are joined by a disulfide bond. N387 acts as the Proton acceptor in catalysis. C389 acts as the Cysteine radical intermediate in catalysis. The Proton acceptor role is filled by E391.

It belongs to the ribonucleoside diphosphate reductase large chain family. As to quaternary structure, heterotetramer composed of a homodimer of the large subunit (R1) and a homodimer of the small subunit (R2). Larger multisubunit protein complex are also active, composed of (R1)n(R2)n.

The enzyme catalyses a 2'-deoxyribonucleoside 5'-diphosphate + [thioredoxin]-disulfide + H2O = a ribonucleoside 5'-diphosphate + [thioredoxin]-dithiol. In terms of biological role, ribonucleoside-diphosphate reductase holoenzyme provides the precursors necessary for viral DNA synthesis. Allows virus growth in non-dividing cells, as well as reactivation from latency in infected hosts. Catalyzes the biosynthesis of deoxyribonucleotides from the corresponding ribonucleotides. The protein is Ribonucleoside-diphosphate reductase large subunit of Epstein-Barr virus (strain GD1) (HHV-4).